A 548-amino-acid chain; its full sequence is Probable malate:quinone oxidoreductase (548 aa).

Belongs to the MQO family. FAD serves as cofactor.

The enzyme catalyses (S)-malate + a quinone = a quinol + oxaloacetate. Its pathway is carbohydrate metabolism; tricarboxylic acid cycle; oxaloacetate from (S)-malate (quinone route): step 1/1. This chain is Probable malate:quinone oxidoreductase, found in Escherichia coli O127:H6 (strain E2348/69 / EPEC).